The sequence spans 572 residues: Arginine--tRNA ligase (572 aa).

Positions Ala127–His137 match the 'HIGH' region motif.

Belongs to the class-I aminoacyl-tRNA synthetase family. In terms of assembly, monomer.

It localises to the cytoplasm. The catalysed reaction is tRNA(Arg) + L-arginine + ATP = L-arginyl-tRNA(Arg) + AMP + diphosphate. This chain is Arginine--tRNA ligase, found in Vesicomyosocius okutanii subsp. Calyptogena okutanii (strain HA).